A 169-amino-acid polypeptide reads, in one-letter code: Crossover junction endodeoxyribonuclease RuvC (169 aa).

Catalysis depends on residues aspartate 11, glutamate 71, and aspartate 143. Mg(2+) is bound by residues aspartate 11, glutamate 71, and aspartate 143.

The protein belongs to the RuvC family. In terms of assembly, homodimer which binds Holliday junction (HJ) DNA. The HJ becomes 2-fold symmetrical on binding to RuvC with unstacked arms; it has a different conformation from HJ DNA in complex with RuvA. In the full resolvosome a probable DNA-RuvA(4)-RuvB(12)-RuvC(2) complex forms which resolves the HJ. Requires Mg(2+) as cofactor.

The protein resides in the cytoplasm. The enzyme catalyses Endonucleolytic cleavage at a junction such as a reciprocal single-stranded crossover between two homologous DNA duplexes (Holliday junction).. Its function is as follows. The RuvA-RuvB-RuvC complex processes Holliday junction (HJ) DNA during genetic recombination and DNA repair. Endonuclease that resolves HJ intermediates. Cleaves cruciform DNA by making single-stranded nicks across the HJ at symmetrical positions within the homologous arms, yielding a 5'-phosphate and a 3'-hydroxyl group; requires a central core of homology in the junction. The consensus cleavage sequence is 5'-(A/T)TT(C/G)-3'. Cleavage occurs on the 3'-side of the TT dinucleotide at the point of strand exchange. HJ branch migration catalyzed by RuvA-RuvB allows RuvC to scan DNA until it finds its consensus sequence, where it cleaves and resolves the cruciform DNA. The sequence is that of Crossover junction endodeoxyribonuclease RuvC from Rhizobium etli (strain CIAT 652).